We begin with the raw amino-acid sequence, 317 residues long: Melanocyte-stimulating hormone receptor (317 aa).

Residues 1–37 are Extracellular-facing; it reads MPVLGSQRRLLGSLNCTPPATFPLMLAPNRTGPQCLE. Asparagine 29 carries an N-linked (GlcNAc...) asparagine glycan. A helical transmembrane segment spans residues 38–63; it reads VSIPNGLFLSLGLVSLVENVLVVAAI. Over 64 to 72 the chain is Cytoplasmic; it reads AKNSNLHSP. A helical transmembrane segment spans residues 73–93; sequence MYYFICCLAVSDLLVSVSNVL. Residues 94–118 lie on the Extracellular side of the membrane; sequence ETAVMLLLEAGALAARAAVVQQLDN. A helical transmembrane segment spans residues 119-140; that stretch reads VIDVLICGSMVSSLCFLGAIAV. Residues 141–163 are Cytoplasmic-facing; the sequence is DRYISIFYALRYHSVVTLPRAWR. The chain crosses the membrane as a helical span at residues 164 to 183; it reads IIAAIWVASILTSLLFITYY. Over 184–191 the chain is Extracellular; it reads NHTVVLLC. A helical transmembrane segment spans residues 192 to 211; sequence LVGFFIAMLALMAVLYVHML. Residues 212-240 are Cytoplasmic-facing; the sequence is ARACQHARGIARLQKRQRPIHRGFGLKGA. The helical transmembrane segment at 241-266 threads the bilayer; that stretch reads ATLTILLGVFFLCWGPFFLHLSLIVL. Topologically, residues 267 to 279 are extracellular; sequence CPQHPTCGCIFKN. A helical transmembrane segment spans residues 280–300; it reads FNLFLALIICNAIVDPLIYAF. Residues 301–317 lie on the Cytoplasmic side of the membrane; the sequence is RSQELRKTLQEVLQCSW. Cysteine 315 carries the S-palmitoyl cysteine lipid modification.

This sequence belongs to the G-protein coupled receptor 1 family. Interacts with MGRN1, but does not undergo MGRN1-mediated ubiquitination; this interaction competes with GNAS-binding and thus inhibits agonist-induced cAMP production. Interacts with OPN3; the interaction results in a decrease in MC1R-mediated cAMP signaling and ultimately a decrease in melanin production in melanocytes.

Its subcellular location is the cell membrane. Receptor for MSH (alpha, beta and gamma) and ACTH. The activity of this receptor is mediated by G proteins which activate adenylate cyclase. Mediates melanogenesis, the production of eumelanin (black/brown) and phaeomelanin (red/yellow), via regulation of cAMP signaling in melanocytes. The protein is Melanocyte-stimulating hormone receptor (MC1R) of Rangifer tarandus (Reindeer).